The chain runs to 405 residues: Argininosuccinate synthase (405 aa).

ATP contacts are provided by residues 11-19 and alanine 38; that span reads AYSGGLDTS. Tyrosine 91 and serine 96 together coordinate L-citrulline. ATP is bound at residue glycine 121. Threonine 123, asparagine 127, and aspartate 128 together coordinate L-aspartate. An L-citrulline-binding site is contributed by asparagine 127. L-citrulline contacts are provided by arginine 131, serine 181, serine 190, glutamate 266, and tyrosine 278.

Belongs to the argininosuccinate synthase family. Type 1 subfamily. As to quaternary structure, homotetramer.

The protein resides in the cytoplasm. The catalysed reaction is L-citrulline + L-aspartate + ATP = 2-(N(omega)-L-arginino)succinate + AMP + diphosphate + H(+). The protein operates within amino-acid biosynthesis; L-arginine biosynthesis; L-arginine from L-ornithine and carbamoyl phosphate: step 2/3. The polypeptide is Argininosuccinate synthase (Nitratiruptor sp. (strain SB155-2)).